Consider the following 48-residue polypeptide: ATP synthase protein 8 (48 aa).

An N-formylmethionine modification is found at Met-1. Residues 1–12 (MPQLIPFFFLNQ) lie on the Mitochondrial intermembrane side of the membrane. The chain crosses the membrane as a helical span at residues 13 to 33 (LFYGYLALFALLVLVSWVILP). Topologically, residues 34–48 (YLLQLQIVRLLITKL) are mitochondrial matrix.

In terms of assembly, F-type ATP synthases have 2 components, the catalytic core F(1) and the membrane-embedded component F(0), linked together by a central stalk and a peripheral stalk. The central stalk, also called rotor shaft, is often seen as part of F(1). The peripheral stalk is seen as part of F(0). F(0) contains the membrane channel next to the rotor. F-type ATP synthases form dimers but each monomer functions independently in ATP generation. The dimer consists of 18 different polypeptides: ATP1 (subunit alpha, part of F(1), 3 molecules per monomer), ATP2 (subunit beta, part of F(1), 3 molecules per monomer), ATP3 (subunit gamma, part of the central stalk), ATP4 (subunit b, part of the peripheral stalk), ATP5/OSCP (subunit 5/OSCP, part of the peripheral stalk), ATP6 (subunit a, part of the peripheral stalk), ATP7 (subunit d, part of the peripheral stalk), ATP8 (subunit 8, part of the peripheral stalk), OLI1 (subunit c, part of the rotor, 10 molecules per monomer), ATP14 (subunit h, part of the peripheral stalk), ATP15 (subunit epsilon, part of the central stalk), ATP16 (subunit delta, part of the central stalk), ATP17 (subunit f, part of the peripheral stalk), ATP18 (subunit i/j, part of the peripheral stalk). Dimer-specific subunits are ATP19 (subunit k, at interface between monomers), ATP20 (subunit g, at interface between monomers), TIM11 (subunit e, at interface between monomers). Also contains subunit L.

It localises to the mitochondrion inner membrane. Functionally, mitochondrial membrane ATP synthase (F(1)F(0) ATP synthase or Complex V) produces ATP from ADP in the presence of a proton gradient across the membrane which is generated by electron transport complexes of the respiratory chain. F-type ATP synthases consist of two structural domains, F(1) - containing the extramembraneous catalytic core, and F(0) - containing the membrane proton channel, linked together by a central stalk and a peripheral stalk. During catalysis, ATP synthesis in the catalytic domain of F(1) is coupled via a rotary mechanism of the central stalk subunits to proton translocation. Part of the complex F(0) domain. Minor subunit located with subunit a/ATP6 in the membrane. The protein is ATP synthase protein 8 of Pichia angusta (Yeast).